A 385-amino-acid chain; its full sequence is Probable di-N-acetylchitobiase 2 (385 aa).

The N-terminal stretch at 1–15 is a signal peptide; sequence MRIILLLFLIVFVVA. Residues 16 to 377 enclose the GH18 domain; it reads QSSSSSSSSG…DALASFFPQS (362 aa). N-linked (GlcNAc...) asparagine glycosylation is found at asparagine 51 and asparagine 101. Catalysis depends on glutamate 129, which acts as the Proton donor. 3 N-linked (GlcNAc...) asparagine glycosylation sites follow: asparagine 223, asparagine 272, and asparagine 296.

This sequence belongs to the glycosyl hydrolase 18 family.

It is found in the lysosome. In terms of biological role, involved in the degradation of asparagine-linked glycoproteins. May hydrolyze of N-acetyl-beta-D-glucosamine (1-4)N-acetylglucosamine chitobiose core from the reducing end of the bond. The polypeptide is Probable di-N-acetylchitobiase 2 (ctbs2) (Dictyostelium discoideum (Social amoeba)).